The primary structure comprises 235 residues: Elongation factor Tu, chloroplastic (235 aa).

The 125-residue stretch at 1 to 125 folds into the tr-type G domain; the sequence is KNMITGAAQM…AVDSYIPTPE (125 aa). 47-50 provides a ligand contact to GTP; sequence NKED.

It belongs to the TRAFAC class translation factor GTPase superfamily. Classic translation factor GTPase family. EF-Tu/EF-1A subfamily.

It is found in the plastid. The protein localises to the chloroplast. It catalyses the reaction GTP + H2O = GDP + phosphate + H(+). Functionally, GTP hydrolase that promotes the GTP-dependent binding of aminoacyl-tRNA to the A-site of ribosomes during protein biosynthesis. The protein is Elongation factor Tu, chloroplastic (tufA) of Mantoniella squamata (Unicellular alga).